A 403-amino-acid chain; its full sequence is Serine/threonine transporter SstT (403 aa).

8 helical membrane passes run 11 to 31 (GNLVIRIAIGLVLGVLLAFIS), 51 to 71 (AIAPILVFVLVLSAIANKEVG), 81 to 101 (VMYVLGTFLAALTAVVFSFIF), 138 to 158 (ALANANFIGILAWAIGLGIPL), 175 to 195 (AVSYVVKMVISVAPIGVFGLV), 213 to 233 (LLGVLLGAMMTVIFVLDPILV), 285 to 305 (VAIPLGATINMAGAAITVTVL), and 319 to 339 (FMTALLLSIVASICACGASGV).

It belongs to the dicarboxylate/amino acid:cation symporter (DAACS) (TC 2.A.23) family.

Its subcellular location is the cell inner membrane. It carries out the reaction L-serine(in) + Na(+)(in) = L-serine(out) + Na(+)(out). The enzyme catalyses L-threonine(in) + Na(+)(in) = L-threonine(out) + Na(+)(out). Its function is as follows. Involved in the import of serine and threonine into the cell, with the concomitant import of sodium (symport system). The chain is Serine/threonine transporter SstT from Haemophilus ducreyi (strain 35000HP / ATCC 700724).